The primary structure comprises 95 residues: MTKSELIERLASQQSHIPAKAVEDAVKEMLEHMASTLAQGERIEIRGFGSFSLHYRAPRTGRNPKTGDKVELEGKYVPHFKPGKELRDRANIYEG.

It belongs to the bacterial histone-like protein family. As to quaternary structure, heterodimer of an alpha and a beta chain.

In terms of biological role, this protein is one of the two subunits of integration host factor, a specific DNA-binding protein that functions in genetic recombination as well as in transcriptional and translational control. The protein is Integration host factor subunit beta of Klebsiella pneumoniae subsp. pneumoniae (strain ATCC 700721 / MGH 78578).